Reading from the N-terminus, the 85-residue chain is Putative membrane protein insertion efficiency factor (85 aa).

The protein belongs to the UPF0161 family.

The protein resides in the cell membrane. Could be involved in insertion of integral membrane proteins into the membrane. Its function is as follows. Lyses fish blood cells. This is Putative membrane protein insertion efficiency factor (hlyA) from Aeromonas hydrophila.